The chain runs to 89 residues: FXYD domain-containing ion transport regulator 4 (89 aa).

Residues 1-20 (MERVTLALLLLAGLTALEAN) form the signal peptide. Residues 21-38 (DPFANKDDPFYYDWKNLQ) lie on the Extracellular side of the membrane. Residues 39–59 (LSGLICGGLLAIAGIAAVLSG) form a helical membrane-spanning segment. Residues 60-89 (KCKCKSSQKQHSPVPEKAIPLITPGSATTC) are Cytoplasmic-facing.

The protein belongs to the FXYD family. As to quaternary structure, regulatory subunit of the sodium/potassium-transporting ATPase which is composed of a catalytic alpha subunit, a non-catalytic beta subunit and a regulatory subunit. The regulatory subunit, a member of the FXYD protein family, modulates the enzymatic activity in a tissue- and isoform-specific way by changing affinities of the Na+/K+-ATPase toward Na(+), K(+) or ATP.

The protein resides in the cell membrane. It is found in the basolateral cell membrane. Associates with and regulates the activity of the sodium/potassium-transporting ATPase (NKA) which catalyzes the hydrolysis of ATP coupled with the exchange of Na(+) and K(+) ions across the plasma membrane. Increases the apparent affinity of the transporter for Na(+) and increases NKA activity. This is FXYD domain-containing ion transport regulator 4 (FXYD4) from Homo sapiens (Human).